The following is a 482-amino-acid chain: Cysteine--tRNA ligase (482 aa).

A Zn(2+)-binding site is contributed by C29. A 'HIGH' region motif is present at residues 31–41 (PTVYDSAHVGH). The Zn(2+) site is built by C210, H235, and E239. The 'KMSKS' region signature appears at 272-276 (KMSKS). K275 serves as a coordination point for ATP.

The protein belongs to the class-I aminoacyl-tRNA synthetase family. Monomer. Requires Zn(2+) as cofactor.

Its subcellular location is the cytoplasm. The enzyme catalyses tRNA(Cys) + L-cysteine + ATP = L-cysteinyl-tRNA(Cys) + AMP + diphosphate. The chain is Cysteine--tRNA ligase from Anaeromyxobacter sp. (strain Fw109-5).